A 492-amino-acid polypeptide reads, in one-letter code: Probable cytochrome P450 516B1 (492 aa).

The chain crosses the membrane as a helical span at residues 1–17 (MYLILSLIIFLAYVAFH). A heme-binding site is contributed by Cys-438.

Belongs to the cytochrome P450 family. Heme is required as a cofactor.

The protein localises to the membrane. This chain is Probable cytochrome P450 516B1 (cyp516B1), found in Dictyostelium discoideum (Social amoeba).